The sequence spans 283 residues: Thymidylate synthase (283 aa).

DUMP is bound at residue R33. H63 provides a ligand contact to (6R)-5,10-methylene-5,6,7,8-tetrahydrofolate. 138-139 (RR) is a dUMP binding site. C158 serves as the catalytic Nucleophile. Residues 185–188 (RSAD), N196, and 226–228 (HIY) contribute to the dUMP site. A (6R)-5,10-methylene-5,6,7,8-tetrahydrofolate-binding site is contributed by D188. (6R)-5,10-methylene-5,6,7,8-tetrahydrofolate is bound at residue A282.

It belongs to the thymidylate synthase family. Bacterial-type ThyA subfamily. As to quaternary structure, homodimer.

Its subcellular location is the cytoplasm. The catalysed reaction is dUMP + (6R)-5,10-methylene-5,6,7,8-tetrahydrofolate = 7,8-dihydrofolate + dTMP. It participates in pyrimidine metabolism; dTTP biosynthesis. Functionally, catalyzes the reductive methylation of 2'-deoxyuridine-5'-monophosphate (dUMP) to 2'-deoxythymidine-5'-monophosphate (dTMP) while utilizing 5,10-methylenetetrahydrofolate (mTHF) as the methyl donor and reductant in the reaction, yielding dihydrofolate (DHF) as a by-product. This enzymatic reaction provides an intracellular de novo source of dTMP, an essential precursor for DNA biosynthesis. This is Thymidylate synthase from Methylibium petroleiphilum (strain ATCC BAA-1232 / LMG 22953 / PM1).